The chain runs to 321 residues: Calcium-binding protein LPS1-alpha (321 aa).

EF-hand domains lie at 15 to 49 (DAIE…NWTE), 47 to 82 (WTEE…STKE), 85 to 120 (YSSD…IYTK), 121 to 156 (VVDG…KLPI), 165 to 200 (EYRE…STKY), 200 to 233 (YSDK…DGVS), 232 to 267 (VSKD…IYRQ), and 269 to 304 (VDFE…NCPY). Ca(2+) contacts are provided by Asp-29, Asn-31, Asp-33, Thr-35, Glu-40, Asp-60, Asn-62, Asp-64, His-66, Glu-71, Asp-98, Asp-100, Asn-102, Arg-104, Glu-109, Asp-134, Asp-136, Asp-138, His-140, Glu-145, Asp-178, Asn-180, Asp-182, Ser-184, Glu-189, Asp-213, Asn-215, Asp-217, Arg-219, Glu-224, Asp-245, Asp-247, Asn-249, Lys-251, Glu-256, Asp-284, Asp-286, Tyr-288, and Glu-293.

Aboral ectoderm, a squamous epithelium covering the surface of the late stage embryo and larva.

Its function is as follows. Calcium-binding protein involved in larval development and metamorphosis. Likely to function as calcium buffers mediating the transport of calcium from the sea water to the blastocoel where calcium is required for skeleton formation. This Lytechinus pictus (Painted sea urchin) protein is Calcium-binding protein LPS1-alpha.